Reading from the N-terminus, the 892-residue chain is Dipeptidyl peptidase 8 (892 aa).

Residues Ser-749, Asp-827, and His-859 each act as charge relay system in the active site.

Belongs to the peptidase S9B family. DPPIV subfamily. As to quaternary structure, homodimer. Forms a ternary complex with NLRP1, composed of a DPP8 homodimer, one full-length NLRP1 protein, and one cleaved C-terminus of NLRP1 (NACHT, LRR and PYD domains-containing protein 1, C-terminus). Forms a ternary complex with CARD8, composed of a DPP8 homodimer, one full-length NLRP1 protein, and one cleaved C-terminus of CARD8 (Caspase recruitment domain-containing protein 8, C-terminus). In the ternary complex, only one subunit of the DPP8 homodimer is bound to NLRP1 or CARD8.

The protein localises to the cytoplasm. It catalyses the reaction Release of an N-terminal dipeptide, Xaa-Yaa-|-Zaa-, from a polypeptide, preferentially when Yaa is Pro, provided Zaa is neither Pro nor hydroxyproline.. Its activity is regulated as follows. Inhibited by zinc. Inhibited by the serine proteinase inhibitor 4-(2-aminoethyl)benzenesulphonyl fluoride (AEBSF), and by di-isopropylfluorophosphate. Specifically inhibited by isoindoline derivatives. Inhibited by Val-boroPro (Talabostat, PT-100), a non-selective inhibitor, which triggers pyroptosis in monocytes and macrophages. Dipeptidyl peptidase that cleaves off N-terminal dipeptides from proteins having a Pro or Ala residue at position 2. Acts as a key inhibitor of caspase-1-dependent monocyte and macrophage pyroptosis in resting cells by preventing activation of NLRP1 and CARD8. Sequesters the cleaved C-terminal part of NLRP1 and CARD8, which respectively constitute the active part of the NLRP1 and CARD8 inflammasomes, in a ternary complex, thereby preventing their oligomerization and activation. The dipeptidyl peptidase activity is required to suppress NLRP1 and CARD8; however, neither NLRP1 nor CARD8 are bona fide substrates of DPP8, suggesting the existence of substrate(s) required for NLRP1 and CARD8 inhibition. This is Dipeptidyl peptidase 8 from Mus musculus (Mouse).